The chain runs to 277 residues: Thymidylate synthase (277 aa).

Residue Arg21 coordinates dUMP. Residue His51 coordinates (6R)-5,10-methylene-5,6,7,8-tetrahydrofolate. 126–127 (RR) lines the dUMP pocket. Residue Cys159 is the Nucleophile of the active site. Residues 179 to 182 (RSAD), Asn190, and 220 to 222 (HLY) each bind dUMP. Asp182 contributes to the (6R)-5,10-methylene-5,6,7,8-tetrahydrofolate binding site. Ser276 lines the (6R)-5,10-methylene-5,6,7,8-tetrahydrofolate pocket.

This sequence belongs to the thymidylate synthase family. Bacterial-type ThyA subfamily. As to quaternary structure, homodimer.

The protein resides in the cytoplasm. It carries out the reaction dUMP + (6R)-5,10-methylene-5,6,7,8-tetrahydrofolate = 7,8-dihydrofolate + dTMP. Its pathway is pyrimidine metabolism; dTTP biosynthesis. Catalyzes the reductive methylation of 2'-deoxyuridine-5'-monophosphate (dUMP) to 2'-deoxythymidine-5'-monophosphate (dTMP) while utilizing 5,10-methylenetetrahydrofolate (mTHF) as the methyl donor and reductant in the reaction, yielding dihydrofolate (DHF) as a by-product. This enzymatic reaction provides an intracellular de novo source of dTMP, an essential precursor for DNA biosynthesis. The polypeptide is Thymidylate synthase (Hydrogenovibrio crunogenus (strain DSM 25203 / XCL-2) (Thiomicrospira crunogena)).